We begin with the raw amino-acid sequence, 268 residues long: Probable 1-acyl-sn-glycerol-3-phosphate acyltransferase (268 aa).

Residues histidine 92 to aspartate 97 carry the HXXXXD motif motif.

The protein belongs to the 1-acyl-sn-glycerol-3-phosphate acyltransferase family.

The catalysed reaction is a 1-acyl-sn-glycero-3-phosphate + an acyl-CoA = a 1,2-diacyl-sn-glycero-3-phosphate + CoA. It functions in the pathway phospholipid metabolism; CDP-diacylglycerol biosynthesis; CDP-diacylglycerol from sn-glycerol 3-phosphate: step 2/3. In terms of biological role, converts lysophosphatidic acid (LPA) into phosphatidic acid by incorporating acyl moiety at the 2 position. The chain is Probable 1-acyl-sn-glycerol-3-phosphate acyltransferase (plsC) from Mycoplasma genitalium (strain ATCC 33530 / DSM 19775 / NCTC 10195 / G37) (Mycoplasmoides genitalium).